A 663-amino-acid chain; its full sequence is Probable potassium transport system protein Kup (663 aa).

The segment at 1–23 (MSDNPSSRAGPEVVPTPPPSPAA) is disordered. Transmembrane regions (helical) follow at residues 81–101 (PANV…VVTF), 137–157 (LLII…VITP), 173–193 (PALE…LFFI), 201–221 (VGAV…ILGV), 224–244 (ILFD…AFFA), 248–268 (WHGF…EALY), 283–303 (WLLV…AILL), 315–335 (LLVP…AAIV), 373–393 (IYVP…VLGF), 399–419 (LAAA…LLFH), 433–453 (AWPL…ANIV), and 455–475 (VEEG…LLST).

Belongs to the HAK/KUP transporter (TC 2.A.72) family.

The protein localises to the cell inner membrane. It carries out the reaction K(+)(in) + H(+)(in) = K(+)(out) + H(+)(out). Its function is as follows. Transport of potassium into the cell. Likely operates as a K(+):H(+) symporter. This Anaeromyxobacter sp. (strain Fw109-5) protein is Probable potassium transport system protein Kup.